We begin with the raw amino-acid sequence, 322 residues long: Undecaprenyl-phosphate 4-deoxy-4-formamido-L-arabinose transferase (322 aa).

Over 1–235 (MFEIHPVKKV…TCLTTTPLRM (235 aa)) the chain is Cytoplasmic. A helical membrane pass occupies residues 236 to 256 (LSLLGSIIAIGGFSIAVLLVI). At 257–269 (LRLTFGPQWAAEG) the chain is on the periplasmic side. Residues 270 to 290 (VFMLFAVLFTFIGAQFIGMGL) form a helical membrane-spanning segment. Residues 291 to 322 (LGEYIGRIYTDVRARPRYFVQQVIRPSSKENE) lie on the Cytoplasmic side of the membrane.

Belongs to the glycosyltransferase 2 family.

The protein localises to the cell inner membrane. The catalysed reaction is UDP-4-deoxy-4-formamido-beta-L-arabinose + di-trans,octa-cis-undecaprenyl phosphate = 4-deoxy-4-formamido-alpha-L-arabinopyranosyl di-trans,octa-cis-undecaprenyl phosphate + UDP. Its pathway is glycolipid biosynthesis; 4-amino-4-deoxy-alpha-L-arabinose undecaprenyl phosphate biosynthesis; 4-amino-4-deoxy-alpha-L-arabinose undecaprenyl phosphate from UDP-4-deoxy-4-formamido-beta-L-arabinose and undecaprenyl phosphate: step 1/2. It participates in bacterial outer membrane biogenesis; lipopolysaccharide biosynthesis. Catalyzes the transfer of 4-deoxy-4-formamido-L-arabinose from UDP to undecaprenyl phosphate. The modified arabinose is attached to lipid A and is required for resistance to polymyxin and cationic antimicrobial peptides. The sequence is that of Undecaprenyl-phosphate 4-deoxy-4-formamido-L-arabinose transferase from Escherichia coli O17:K52:H18 (strain UMN026 / ExPEC).